A 780-amino-acid polypeptide reads, in one-letter code: Aconitate hydratase, mitochondrial (780 aa).

A mitochondrion-targeting transit peptide spans 1–27; the sequence is MAPYSLLVTRLQKALGVRQYHVASVLC. The residue at position 31 (lysine 31) is an N6-succinyllysine. Lysine 50 is subject to N6-acetyllysine; alternate. An N6-succinyllysine; alternate modification is found at lysine 50. Glutamine 99 provides a ligand contact to substrate. N6-acetyllysine; alternate occurs at positions 138 and 144. N6-succinyllysine; alternate is present on residues lysine 138 and lysine 144. Residue 192-194 coordinates substrate; the sequence is DSH. Lysine 233 bears the N6-acetyllysine; alternate mark. Lysine 233 carries the N6-succinyllysine; alternate modification. Cysteine 385 is a binding site for [4Fe-4S] cluster. Position 411 is an N6-succinyllysine (lysine 411). [4Fe-4S] cluster-binding residues include cysteine 448 and cysteine 451. Positions 474 and 479 each coordinate substrate. Over residues 528–537 the composition is skewed to basic and acidic residues; sequence DADELPKGEF. The interval 528 to 560 is disordered; that stretch reads DADELPKGEFDPGQDTYQHPPKDSSGQHVDVSP. Lysine 549 is subject to N6-succinyllysine. Residues 551-560 show a composition bias toward polar residues; it reads SSGQHVDVSP. At serine 559 the chain carries Phosphoserine. An N6-acetyllysine; alternate modification is found at lysine 573. N6-succinyllysine; alternate is present on lysine 573. 2 positions are modified to N6-succinyllysine: lysine 577 and lysine 591. At lysine 605 the chain carries N6-acetyllysine; alternate. Lysine 605 is subject to N6-succinyllysine; alternate. Arginine 607 is a binding site for substrate. Lysine 628 is modified (N6-succinyllysine). Position 670 is a phosphoserine (serine 670). 670 to 671 is a substrate binding site; sequence SR. Residue lysine 689 is modified to N6-succinyllysine. Residues lysine 723 and lysine 730 each carry the N6-acetyllysine; alternate modification. An N6-succinyllysine; alternate mark is found at lysine 723 and lysine 730. N6-acetyllysine occurs at positions 736, 739, and 743.

It belongs to the aconitase/IPM isomerase family. As to quaternary structure, monomer. The cofactor is [4Fe-4S] cluster. Post-translationally, forms covalent cross-links mediated by transglutaminase TGM2, between a glutamine and the epsilon-amino group of a lysine residue, forming homopolymers and heteropolymers.

The protein resides in the mitochondrion. It catalyses the reaction citrate = D-threo-isocitrate. It functions in the pathway carbohydrate metabolism; tricarboxylic acid cycle; isocitrate from oxaloacetate: step 2/2. Functionally, catalyzes the isomerization of citrate to isocitrate via cis-aconitate. This Homo sapiens (Human) protein is Aconitate hydratase, mitochondrial (ACO2).